The sequence spans 246 residues: Large ribosomal subunit protein uL3 (246 aa).

Position 151 is an N5-methylglutamine (Gln-151).

It belongs to the universal ribosomal protein uL3 family. As to quaternary structure, part of the 50S ribosomal subunit. Forms a cluster with proteins L14 and L19. Post-translationally, methylated by PrmB.

Its function is as follows. One of the primary rRNA binding proteins, it binds directly near the 3'-end of the 23S rRNA, where it nucleates assembly of the 50S subunit. This Bartonella henselae (strain ATCC 49882 / DSM 28221 / CCUG 30454 / Houston 1) (Rochalimaea henselae) protein is Large ribosomal subunit protein uL3.